We begin with the raw amino-acid sequence, 347 residues long: Transcription factor EC (347 aa).

Residues 1 to 119 (MTLDHQIINP…GLTSASCPSS (119 aa)) are necessary for transcriptional transactivation. Residues 139 to 192 (QKKDNHNLIERRRRYNINYRIKELGTLIPKSNDPDMRWNKGTILKASVEYIKWL) form the bHLH domain. A necessary for transcriptional transactivation region spans residues 271 to 347 (PSPEFCDQAI…SFSSDDGDEL (77 aa)). The disordered stretch occupies residues 319–347 (DPLLSATSPAVSKESSRRSSFSSDDGDEL). Low complexity predominate over residues 326–341 (SPAVSKESSRRSSFSS).

The protein belongs to the MiT/TFE family. As to quaternary structure, homodimer. Forms heterodimers with MITF and TFE3. Interacts with MITF.

It localises to the nucleus. Transcriptional regulator that acts as a repressor or an activator. Acts as a transcriptional repressor on minimal promoter containing element F (that includes an E-box sequence). Binds to element F in an E-box sequence-specific manner. Acts as a transcriptional transactivator on the proximal promoter region of the tartrate-resistant acid phosphatase (TRAP) E-box containing promoter. Collaborates with MITF in target gene activation. Acts as a transcriptional repressor on minimal promoter containing mu E3 enhancer sequence. Binds to mu E3 DNA sequence of the immunoglobulin heavy-chain gene enhancer. Binds DNA in a homo- or heterodimeric form. The sequence is that of Transcription factor EC (TFEC) from Pan troglodytes (Chimpanzee).